The chain runs to 1077 residues: Endo-1,4-beta-xylanase Y (1077 aa).

An N-terminal signal peptide occupies residues 1–26 (MKNKRVLAKITALVVLLGVFFVLPSN). A CBM-cenC 1 domain is found at 33–180 (DYEVVHDTFE…IFDDVTITRK (148 aa)). The region spanning 189-538 (YAANAVLKDM…KPAYNAVASI (350 aa)) is the GH10 domain. The active-site Proton donor is the Glu-337. Glu-460 (nucleophile) is an active-site residue. Residues 543–563 (EWGDGNNPAGGGGGGKPEEPD) form a disordered region. Residues 565-714 (NGYYYHDTFE…YIDEAIGAVA (150 aa)) form the CBM-cenC 2 domain. One can recognise a Dockerin domain in the interval 728–796 (PPVLLGDVNG…LLRVIDKFPV (69 aa)).

Belongs to the glycosyl hydrolase 10 (cellulase F) family.

The enzyme catalyses Endohydrolysis of (1-&gt;4)-beta-D-xylosidic linkages in xylans.. The sequence is that of Endo-1,4-beta-xylanase Y (xynY) from Acetivibrio thermocellus (Hungateiclostridium thermocellum).